A 744-amino-acid chain; its full sequence is Phosphoribosylformylglycinamidine synthase subunit PurL (744 aa).

H50 is a catalytic residue. Residues Y53 and K92 each contribute to the ATP site. A Mg(2+)-binding site is contributed by E94. Substrate-binding positions include 95 to 98 (SHNH) and R117. The active-site Proton acceptor is the H96. D118 contributes to the Mg(2+) binding site. Residue Q241 coordinates substrate. D269 contacts Mg(2+). A substrate-binding site is contributed by 313–315 (ESQ). ATP is bound by residues D495 and G532. N533 lines the Mg(2+) pocket. A substrate-binding site is contributed by S535.

It belongs to the FGAMS family. As to quaternary structure, monomer. Part of the FGAM synthase complex composed of 1 PurL, 1 PurQ and 2 PurS subunits.

The protein localises to the cytoplasm. It catalyses the reaction N(2)-formyl-N(1)-(5-phospho-beta-D-ribosyl)glycinamide + L-glutamine + ATP + H2O = 2-formamido-N(1)-(5-O-phospho-beta-D-ribosyl)acetamidine + L-glutamate + ADP + phosphate + H(+). Its pathway is purine metabolism; IMP biosynthesis via de novo pathway; 5-amino-1-(5-phospho-D-ribosyl)imidazole from N(2)-formyl-N(1)-(5-phospho-D-ribosyl)glycinamide: step 1/2. Part of the phosphoribosylformylglycinamidine synthase complex involved in the purines biosynthetic pathway. Catalyzes the ATP-dependent conversion of formylglycinamide ribonucleotide (FGAR) and glutamine to yield formylglycinamidine ribonucleotide (FGAM) and glutamate. The FGAM synthase complex is composed of three subunits. PurQ produces an ammonia molecule by converting glutamine to glutamate. PurL transfers the ammonia molecule to FGAR to form FGAM in an ATP-dependent manner. PurS interacts with PurQ and PurL and is thought to assist in the transfer of the ammonia molecule from PurQ to PurL. The chain is Phosphoribosylformylglycinamidine synthase subunit PurL from Rhizobium johnstonii (strain DSM 114642 / LMG 32736 / 3841) (Rhizobium leguminosarum bv. viciae).